A 375-amino-acid chain; its full sequence is 4,4'-diaponeurosporenoate glycosyltransferase (375 aa).

A run of 4 helical transmembrane segments spans residues 3-23, 164-184, 277-297, and 330-350; these read WLSRILTVIVAMSMACGALIF, FYEGFSAIFNLMTVVGMNVFS, IMAAIVLWLFGSIASILGLCL, and FSNLLMVCHPLLFMFFTKIFI.

It belongs to the glycosyltransferase 2 family. CrtQ subfamily.

It is found in the cell membrane. It functions in the pathway carotenoid biosynthesis; staphyloxanthin biosynthesis; staphyloxanthin from farnesyl diphosphate: step 4/5. In terms of biological role, catalyzes the glycosylation of 4,4'-diaponeurosporenoate, i.e. the esterification of glucose at the C1'' position with the carboxyl group of 4,4'-diaponeurosporenic acid, to form glycosyl-4,4'-diaponeurosporenoate. This is a step in the biosynthesis of staphyloxanthin, an orange pigment present in most staphylococci strains. The sequence is that of 4,4'-diaponeurosporenoate glycosyltransferase (crtQ) from Staphylococcus aureus (strain bovine RF122 / ET3-1).